A 464-amino-acid polypeptide reads, in one-letter code: MASKSTSTAVWGQLRHLAQQQTRCYSATADSIPASKKKYVPTKGVYPKGFRVSGTIVGVKPGNTTKPDLAFVTSDTPCAAAAVFTKNRFQAAPVTFSRDLLKKKGNSGVNGVIINSGCANAVTGKGGLEDAESMAREADRCLGGDGTIVMSTGVIGQRLPIKRILDNVPAAHSRLGSSHDHWLSCATAICTTDTFPKLMSRSFTLPSSPSVEYRIAGMTKGAGMIHPNMATLLGVIATDAPIAPAVLPSLLKNAVDRSFNSITIDGDTSTNDTVALLANGAAGGKEIASESSPDFAAFRDVLNVFSEDLAKLIVRDGEGATKFVTIRVVESDSEETAKKVASTIARSPLVKTALYGKDANWGRILCATGYALISEPGSAAVAEVSDKIVPEKTNVSFVPTDGTAELKLLVDGEPEQVDEVRAAEILKAEDLEILVRLGTGKAEGTYWTCDFSHEYVTINGDYRT.

Thr191, Lys220, Thr231, Glu318, Asn459, and Thr464 together coordinate substrate. The Nucleophile role is filled by Thr231.

The protein belongs to the ArgJ family. In terms of assembly, heterodimer of an alpha and a beta chain. The alpha and beta chains are autoproteolytically processed from a single precursor protein within the mitochondrion.

Its subcellular location is the mitochondrion matrix. It carries out the reaction N(2)-acetyl-L-ornithine + L-glutamate = N-acetyl-L-glutamate + L-ornithine. The enzyme catalyses L-glutamate + acetyl-CoA = N-acetyl-L-glutamate + CoA + H(+). It functions in the pathway amino-acid biosynthesis; L-arginine biosynthesis; L-ornithine and N-acetyl-L-glutamate from L-glutamate and N(2)-acetyl-L-ornithine (cyclic): step 1/1. The protein operates within amino-acid biosynthesis; L-arginine biosynthesis; N(2)-acetyl-L-ornithine from L-glutamate: step 1/4. Catalyzes two activities which are involved in the cyclic version of arginine biosynthesis: the synthesis of acetylglutamate from glutamate and acetyl-CoA, and of ornithine by transacetylation between acetylornithine and glutamate. The polypeptide is Arginine biosynthesis bifunctional protein ArgJ, mitochondrial (Pyricularia oryzae (strain 70-15 / ATCC MYA-4617 / FGSC 8958) (Rice blast fungus)).